Reading from the N-terminus, the 141-residue chain is MSSPIISNYLEGIRDNKYLQRIEWEIQVAQSGFRAIPITERWWGEASYYIDLANKIKALPELSNVKTKPIGYALAAARYVKHNNFGMAEIYLDRFESALVRSGLSRDMARRVREHVAKMIGLGGGGGGGGGGGGGGGVSLP.

This is an uncharacterized protein from Thermoproteus tenax (TTV1).